Consider the following 359-residue polypeptide: Nicotinate-nucleotide--dimethylbenzimidazole phosphoribosyltransferase (359 aa).

Catalysis depends on glutamate 318, which acts as the Proton acceptor.

This sequence belongs to the CobT family. Homodimer.

The enzyme catalyses 5,6-dimethylbenzimidazole + nicotinate beta-D-ribonucleotide = alpha-ribazole 5'-phosphate + nicotinate + H(+). The protein operates within nucleoside biosynthesis; alpha-ribazole biosynthesis; alpha-ribazole from 5,6-dimethylbenzimidazole: step 1/2. Catalyzes the synthesis of alpha-ribazole-5'-phosphate from nicotinate mononucleotide (NAMN) and 5,6-dimethylbenzimidazole (DMB). The polypeptide is Nicotinate-nucleotide--dimethylbenzimidazole phosphoribosyltransferase (Escherichia coli O81 (strain ED1a)).